We begin with the raw amino-acid sequence, 195 residues long: 3-isopropylmalate dehydratase small subunit (195 aa).

It belongs to the LeuD family. LeuD type 1 subfamily. Heterodimer of LeuC and LeuD.

It catalyses the reaction (2R,3S)-3-isopropylmalate = (2S)-2-isopropylmalate. The protein operates within amino-acid biosynthesis; L-leucine biosynthesis; L-leucine from 3-methyl-2-oxobutanoate: step 2/4. Its function is as follows. Catalyzes the isomerization between 2-isopropylmalate and 3-isopropylmalate, via the formation of 2-isopropylmaleate. This chain is 3-isopropylmalate dehydratase small subunit, found in Frankia casuarinae (strain DSM 45818 / CECT 9043 / HFP020203 / CcI3).